A 196-amino-acid chain; its full sequence is Imidazoleglycerol-phosphate dehydratase (196 aa).

It belongs to the imidazoleglycerol-phosphate dehydratase family.

It is found in the cytoplasm. It catalyses the reaction D-erythro-1-(imidazol-4-yl)glycerol 3-phosphate = 3-(imidazol-4-yl)-2-oxopropyl phosphate + H2O. It functions in the pathway amino-acid biosynthesis; L-histidine biosynthesis; L-histidine from 5-phospho-alpha-D-ribose 1-diphosphate: step 6/9. The sequence is that of Imidazoleglycerol-phosphate dehydratase from Solidesulfovibrio magneticus (strain ATCC 700980 / DSM 13731 / RS-1) (Desulfovibrio magneticus).